We begin with the raw amino-acid sequence, 311 residues long: Formimidoylglutamase (311 aa).

6 residues coordinate Mn(2+): histidine 130, aspartate 155, histidine 157, aspartate 159, cysteine 242, and aspartate 244.

The protein belongs to the arginase family. It depends on Mn(2+) as a cofactor.

It catalyses the reaction N-formimidoyl-L-glutamate + H2O = formamide + L-glutamate. Its pathway is amino-acid degradation; L-histidine degradation into L-glutamate; L-glutamate from N-formimidoyl-L-glutamate (hydrolase route): step 1/1. Its function is as follows. Catalyzes the conversion of N-formimidoyl-L-glutamate to L-glutamate and formamide. The protein is Formimidoylglutamase of Staphylococcus epidermidis (strain ATCC 35984 / DSM 28319 / BCRC 17069 / CCUG 31568 / BM 3577 / RP62A).